Here is a 620-residue protein sequence, read N- to C-terminus: Probable translation initiation factor IF-2 (620 aa).

Over residues 1–10 (MSDTDADADT) the composition is skewed to acidic residues. The disordered stretch occupies residues 1–29 (MSDTDADADTDAVSTTETSMNADANANAD). Positions 11–29 (DAVSTTETSMNADANANAD) are enriched in low complexity. In terms of domain architecture, tr-type G spans 33–248 (LRTPIVAVLG…VLMGLSQRYM (216 aa)). The segment at 42-49 (GHVDHGKT) is G1. 42-49 (GHVDHGKT) serves as a coordination point for GTP. Residues 67 to 71 (AITQH) are G2. The tract at residues 104–107 (DTPG) is G3. Residues 104-108 (DTPGH) and 158-161 (NKVD) each bind GTP. The tract at residues 158–161 (NKVD) is G4. The span at 162–183 (TTPGWTPTDGSPIQPTYESQPS) shows a compositional bias: polar residues. The segment at 162-185 (TTPGWTPTDGSPIQPTYESQPSAA) is disordered. Residues 226-228 (SAI) are G5.

The protein belongs to the TRAFAC class translation factor GTPase superfamily. Classic translation factor GTPase family. IF-2 subfamily.

Functionally, function in general translation initiation by promoting the binding of the formylmethionine-tRNA to ribosomes. Seems to function along with eIF-2. The protein is Probable translation initiation factor IF-2 of Haloquadratum walsbyi (strain DSM 16790 / HBSQ001).